The following is a 1444-amino-acid chain: DNA polymerase III PolC-type (1444 aa).

Residues 428 to 584 (YCVFDVETTG…FDAEATAYLA (157 aa)) enclose the Exonuclease domain.

The protein belongs to the DNA polymerase type-C family. PolC subfamily.

Its subcellular location is the cytoplasm. It catalyses the reaction DNA(n) + a 2'-deoxyribonucleoside 5'-triphosphate = DNA(n+1) + diphosphate. In terms of biological role, required for replicative DNA synthesis. This DNA polymerase also exhibits 3' to 5' exonuclease activity. This chain is DNA polymerase III PolC-type, found in Listeria monocytogenes serovar 1/2a (strain ATCC BAA-679 / EGD-e).